Reading from the N-terminus, the 467-residue chain is UDP-N-acetylmuramate--L-alanine ligase (467 aa).

Gly-114–Thr-120 is a binding site for ATP.

The protein belongs to the MurCDEF family.

It is found in the cytoplasm. The enzyme catalyses UDP-N-acetyl-alpha-D-muramate + L-alanine + ATP = UDP-N-acetyl-alpha-D-muramoyl-L-alanine + ADP + phosphate + H(+). Its pathway is cell wall biogenesis; peptidoglycan biosynthesis. In terms of biological role, cell wall formation. This Chlorobium chlorochromatii (strain CaD3) protein is UDP-N-acetylmuramate--L-alanine ligase.